The following is a 238-amino-acid chain: NADH-quinone oxidoreductase subunit I (238 aa).

4Fe-4S ferredoxin-type domains lie at 81 to 111 (LVPR…IEAG) and 123 to 152 (VKFV…MDSG). [4Fe-4S] cluster contacts are provided by C91, C94, C97, C101, C132, C135, C138, and C142.

This sequence belongs to the complex I 23 kDa subunit family. NDH-1 is composed of 14 different subunits. Subunits NuoA, H, J, K, L, M, N constitute the membrane sector of the complex. Requires [4Fe-4S] cluster as cofactor.

The protein localises to the cell inner membrane. The catalysed reaction is a quinone + NADH + 5 H(+)(in) = a quinol + NAD(+) + 4 H(+)(out). NDH-1 shuttles electrons from NADH, via FMN and iron-sulfur (Fe-S) centers, to quinones in the respiratory chain. The immediate electron acceptor for the enzyme in this species is believed to be ubiquinone. Couples the redox reaction to proton translocation (for every two electrons transferred, four hydrogen ions are translocated across the cytoplasmic membrane), and thus conserves the redox energy in a proton gradient. In Anaeromyxobacter sp. (strain Fw109-5), this protein is NADH-quinone oxidoreductase subunit I.